A 471-amino-acid chain; its full sequence is UDP-N-acetylmuramoylalanine--D-glutamate ligase (471 aa).

Residue 127-133 participates in ATP binding; sequence GSNGKST.

This sequence belongs to the MurCDEF family.

It localises to the cytoplasm. The enzyme catalyses UDP-N-acetyl-alpha-D-muramoyl-L-alanine + D-glutamate + ATP = UDP-N-acetyl-alpha-D-muramoyl-L-alanyl-D-glutamate + ADP + phosphate + H(+). It functions in the pathway cell wall biogenesis; peptidoglycan biosynthesis. Cell wall formation. Catalyzes the addition of glutamate to the nucleotide precursor UDP-N-acetylmuramoyl-L-alanine (UMA). This chain is UDP-N-acetylmuramoylalanine--D-glutamate ligase, found in Colwellia psychrerythraea (strain 34H / ATCC BAA-681) (Vibrio psychroerythus).